We begin with the raw amino-acid sequence, 833 residues long: DNA gyrase subunit A (833 aa).

The region spanning 34–500 is the Topo IIA-type catalytic domain; sequence LPDVRDGLKP…AGDVRDIEDI (467 aa). Catalysis depends on Tyr122, which acts as the O-(5'-phospho-DNA)-tyrosine intermediate. Residues 527–533 carry the GyrA-box motif; it reads QKRGGQG.

It belongs to the type II topoisomerase GyrA/ParC subunit family. Heterotetramer, composed of two GyrA and two GyrB chains. In the heterotetramer, GyrA contains the active site tyrosine that forms a transient covalent intermediate with DNA, while GyrB binds cofactors and catalyzes ATP hydrolysis.

It is found in the cytoplasm. The enzyme catalyses ATP-dependent breakage, passage and rejoining of double-stranded DNA.. Functionally, a type II topoisomerase that negatively supercoils closed circular double-stranded (ds) DNA in an ATP-dependent manner to modulate DNA topology and maintain chromosomes in an underwound state. Negative supercoiling favors strand separation, and DNA replication, transcription, recombination and repair, all of which involve strand separation. Also able to catalyze the interconversion of other topological isomers of dsDNA rings, including catenanes and knotted rings. Type II topoisomerases break and join 2 DNA strands simultaneously in an ATP-dependent manner. The chain is DNA gyrase subunit A from Chlamydia muridarum (strain MoPn / Nigg).